A 390-amino-acid chain; its full sequence is S-adenosylmethionine synthase (390 aa).

An ATP-binding site is contributed by His15. Residue Asp17 participates in Mg(2+) binding. Glu43 serves as a coordination point for K(+). Residues Glu56 and Gln99 each contribute to the L-methionine site. Residues 99–109 form a flexible loop region; the sequence is QSPDINQGVDR. ATP contacts are provided by residues 164–166, 230–231, Asp239, 245–246, Ala262, and Lys266; these read DAK, RF, and RK. Residue Asp239 coordinates L-methionine. Residue Lys270 participates in L-methionine binding.

This sequence belongs to the AdoMet synthase family. In terms of assembly, homotetramer; dimer of dimers. Requires Mg(2+) as cofactor. It depends on K(+) as a cofactor.

It is found in the cytoplasm. It catalyses the reaction L-methionine + ATP + H2O = S-adenosyl-L-methionine + phosphate + diphosphate. It participates in amino-acid biosynthesis; S-adenosyl-L-methionine biosynthesis; S-adenosyl-L-methionine from L-methionine: step 1/1. In terms of biological role, catalyzes the formation of S-adenosylmethionine (AdoMet) from methionine and ATP. The overall synthetic reaction is composed of two sequential steps, AdoMet formation and the subsequent tripolyphosphate hydrolysis which occurs prior to release of AdoMet from the enzyme. The sequence is that of S-adenosylmethionine synthase from Photorhabdus laumondii subsp. laumondii (strain DSM 15139 / CIP 105565 / TT01) (Photorhabdus luminescens subsp. laumondii).